The chain runs to 500 residues: MATAASNPYLPGNSLLAAGSIVHSDAAGAGGGGGGGGGGGGGGAGGGGGGMQPGSAAVTSGAYRGDPSSVKMVQSDFMQGAMAASNGGHMLSHAHQWVTALPHAAAAAAAAAAAAVEASSPWSGSAVGMAGSPQQPPQPPPPPPQGPDVKGGAGRDDLHAGTALHHRGPPHLGPPPPPPHQGHPGGWGAAAAAAAAAAAAAAAAHLPSMAGGQQPPPQSLLYSQPGGFTVNGMLSAPPGPGGGGGGAGGGAQSLVHPGLVRGDTPELAEHHHHHHHHAHPHPPHPHHAQGPPHHGGGGGGAGPGLNSHDPHSDEDTPTSDDLEQFAKQFKQRRIKLGFTQADVGLALGTLYGNVFSQTTICRFEALQLSFKNMCKLKPLLNKWLEEADSSTGSPTSIDKIAAQGRKRKKRTSIEVSVKGALESHFLKCPKPSAQEITNLADSLQLEKEVVRVWFCNRRQKEKRMTPPGIQQQTPDDVYSQVGTVSADTPPPHHGLQTSVQ.

The span at 32–52 shows a compositional bias: gly residues; the sequence is GGGGGGGGGGGGAGGGGGGMQ. 4 disordered regions span residues 32-63, 122-190, 231-319, and 461-500; these read GGGG…SGAY, WSGS…WGAA, NGML…TPTS, and EKRM…TSVQ. 2 stretches are compositionally biased toward pro residues: residues 134 to 146 and 171 to 181; these read QQPP…PPQG and HLGPPPPPPHQ. Residues 241–251 are compositionally biased toward gly residues; sequence GGGGGGAGGGA. Residues 270–287 are compositionally biased toward basic residues; the sequence is HHHHHHHHAHPHPPHPHH. Positions 293–303 are enriched in gly residues; that stretch reads HHGGGGGGAGP. The POU-specific domain maps to 314–388; that stretch reads EDTPTSDDLE…LLNKWLEEAD (75 aa). The segment at residues 406–465 is a DNA-binding region (homeobox); it reads KRKKRTSIEVSVKGALESHFLKCPKPSAQEITNLADSLQLEKEVVRVWFCNRRQKEKRMT. The span at 468–486 shows a compositional bias: polar residues; sequence GIQQQTPDDVYSQVGTVSA.

It belongs to the POU transcription factor family. Class-3 subfamily. In terms of assembly, homodimer. Brain.

Its subcellular location is the nucleus. Functionally, transcription factor that acts synergistically with SOX11 and SOX4. Plays a role in neuronal development. Is implicated in an enhancer activity at the embryonic met-mesencephalic junction; the enhancer element contains the octamer motif (5'-ATTTGCAT-3'). The chain is POU domain, class 3, transcription factor 3 from Homo sapiens (Human).